A 421-amino-acid polypeptide reads, in one-letter code: FBD-associated F-box protein At5g56370 (421 aa).

One can recognise an F-box domain in the interval 1-52; it reads MDSISLLPDDFLLRILSLLPTKDVLNTSVLSKRWRYLWKLVPKLQYSLIDKN. The FBD domain occupies 332–382; that stretch reads HWEEPSSVPETLMFVLETLEWRNYRGLKMENELASFLLKHSRRLKIATFSP.

This chain is FBD-associated F-box protein At5g56370, found in Arabidopsis thaliana (Mouse-ear cress).